The following is a 312-amino-acid chain: Glyoxylate/hydroxypyruvate reductase A (312 aa).

Residue Arg-227 is part of the active site. The active-site Proton donor is His-275.

This sequence belongs to the D-isomer specific 2-hydroxyacid dehydrogenase family. GhrA subfamily.

It is found in the cytoplasm. It catalyses the reaction glycolate + NADP(+) = glyoxylate + NADPH + H(+). It carries out the reaction (R)-glycerate + NAD(+) = 3-hydroxypyruvate + NADH + H(+). The catalysed reaction is (R)-glycerate + NADP(+) = 3-hydroxypyruvate + NADPH + H(+). Catalyzes the NADPH-dependent reduction of glyoxylate and hydroxypyruvate into glycolate and glycerate, respectively. This is Glyoxylate/hydroxypyruvate reductase A from Salmonella agona (strain SL483).